We begin with the raw amino-acid sequence, 305 residues long: Homoserine kinase (305 aa).

93-103 provides a ligand contact to ATP; it reads PLSRGLGSSAT.

It belongs to the GHMP kinase family. Homoserine kinase subfamily.

Its subcellular location is the cytoplasm. It carries out the reaction L-homoserine + ATP = O-phospho-L-homoserine + ADP + H(+). It functions in the pathway amino-acid biosynthesis; L-threonine biosynthesis; L-threonine from L-aspartate: step 4/5. Functionally, catalyzes the ATP-dependent phosphorylation of L-homoserine to L-homoserine phosphate. This is Homoserine kinase from Picosynechococcus sp. (strain ATCC 27264 / PCC 7002 / PR-6) (Agmenellum quadruplicatum).